We begin with the raw amino-acid sequence, 158 residues long: Cyclic pyranopterin monophosphate synthase (158 aa).

Substrate-binding positions include 75-77 (LCH) and 113-114 (ME). Residue Asp128 is part of the active site.

The protein belongs to the MoaC family. In terms of assembly, homohexamer; trimer of dimers.

It carries out the reaction (8S)-3',8-cyclo-7,8-dihydroguanosine 5'-triphosphate = cyclic pyranopterin phosphate + diphosphate. It participates in cofactor biosynthesis; molybdopterin biosynthesis. In terms of biological role, catalyzes the conversion of (8S)-3',8-cyclo-7,8-dihydroguanosine 5'-triphosphate to cyclic pyranopterin monophosphate (cPMP). This chain is Cyclic pyranopterin monophosphate synthase, found in Acidiphilium cryptum (strain JF-5).